A 197-amino-acid polypeptide reads, in one-letter code: Adenylate kinase (197 aa).

Glycine 16–threonine 21 lines the ATP pocket. The tract at residues serine 36–valine 65 is NMP. AMP contacts are provided by residues threonine 37, arginine 42, glutamine 63–valine 65, glycine 90–arginine 93, and glutamine 97. The segment at aspartate 131–aspartate 147 is LID. Arginine 132 contributes to the ATP binding site. Positions valine 137–valine 158 are disordered. The segment covering arginine 141–arginine 153 has biased composition (basic and acidic residues). AMP contacts are provided by arginine 144 and arginine 155. Glycine 183 provides a ligand contact to ATP.

The protein belongs to the adenylate kinase family. Monomer.

It is found in the cytoplasm. The catalysed reaction is AMP + ATP = 2 ADP. Its pathway is purine metabolism; AMP biosynthesis via salvage pathway; AMP from ADP: step 1/1. Functionally, catalyzes the reversible transfer of the terminal phosphate group between ATP and AMP. Plays an important role in cellular energy homeostasis and in adenine nucleotide metabolism. In Deinococcus radiodurans (strain ATCC 13939 / DSM 20539 / JCM 16871 / CCUG 27074 / LMG 4051 / NBRC 15346 / NCIMB 9279 / VKM B-1422 / R1), this protein is Adenylate kinase.